We begin with the raw amino-acid sequence, 229 residues long: Peptidase E (229 aa).

Active-site charge relay system residues include S120, D135, and H157.

The protein belongs to the peptidase S51 family.

It is found in the cytoplasm. It catalyses the reaction Dipeptidase E catalyzes the hydrolysis of dipeptides Asp-|-Xaa. It does not act on peptides with N-terminal Glu, Asn or Gln, nor does it cleave isoaspartyl peptides.. Its function is as follows. Hydrolyzes dipeptides containing N-terminal aspartate residues. May play a role in allowing the cell to use peptide aspartate to spare carbon otherwise required for the synthesis of the aspartate family of amino acids. This is Peptidase E from Salmonella paratyphi C (strain RKS4594).